We begin with the raw amino-acid sequence, 257 residues long: Enterotoxin type A (257 aa).

A signal peptide spans 1–27 (MKKTAFILLLFIALTWTTSPLVNGSEK). C120 and C130 are disulfide-bonded. Residues H211, H249, and D251 each coordinate Zn(2+).

Belongs to the staphylococcal/streptococcal toxin family. In terms of assembly, monomer. Interacts with MHC class II molecules alpha/HLA-DRB1 and beta/HLA-DRA chains. The interaction with MHC-II molecules occurs at both zinc-dependent and zinc-independent sites. Interacts with T-cell receptor beta variable 7-9/TRBV7-9. The cofactor is Zn(2+).

The protein localises to the secreted. Functionally, staphylococcal enterotoxin that activates the host immune system by binding as unprocessed molecules to major histocompatibility (MHC) complex class II and T-cell receptor (TCR) molecules. In turn, waves of cellular activation, cytokine production, and migration into the lung tissue and airways occur via alphabeta T-cells. Also causes the intoxication staphylococcal food poisoning syndrome. The illness is characterized by high fever, hypotension, diarrhea, shock, and in some cases death. The protein is Enterotoxin type A (sea) of Staphylococcus aureus (strain Newman).